Reading from the N-terminus, the 497-residue chain is Angiopoietin-1 (497 aa).

A signal peptide spans 1 to 19 (MTVFLSFAFFAAILTHIGC). Positions 81-119 (QKLQHLEHVMENYTQWLQKLENYIVENMKSEMAQIQQNA) form a coiled coil. Residues N92, N122, N154, N243, and N294 are each glycosylated (N-linked (GlcNAc...) asparagine). Residues 153–261 (LNQTSRLEIQ…LELMDTVHNL (109 aa)) are a coiled coil. The region spanning 276 to 496 (REEEKPFRDC…STTMMIRPLD (221 aa)) is the Fibrinogen C-terminal domain. 2 disulfide bridges follow: C285–C314 and C438–C451.

As to quaternary structure, homooligomer. Interacts with TEK/TIE2. Interacts with SVEP1/polydom. Interacts with THBD; this interaction significantly inhibits the generation of activated PC and TAFIa/CPB2 by the thrombin/thrombomodulin complex.

The protein resides in the secreted. Functionally, binds and activates TIE2 receptor by inducing its tyrosine phosphorylation. Implicated in endothelial developmental processes later and distinct from that of VEGF. Appears to play a crucial role in mediating reciprocal interactions between the endothelium and surrounding matrix and mesenchyme. Mediates blood vessel maturation/stability. It may play an important role in the heart early development. The protein is Angiopoietin-1 (Angpt1) of Rattus norvegicus (Rat).